The primary structure comprises 282 residues: Transcription factor LBX1 (282 aa).

Residues 1-20 (MTSKEDGKAAPGEERRRSPL) show a composition bias toward basic and acidic residues. Positions 1 to 36 (MTSKEDGKAAPGEERRRSPLDHLPPPANSNKPLTPF) are disordered. The segment at residues 125-184 (RRKSRTAFTNHQIYELEKRFLYQKYLSPADRDQIAQQLGLTNAQVITWFQNRRAKLKRDL) is a DNA-binding region (homeobox). Residues 210–282 (ELEQNSEASG…EEDEEIDVDD (73 aa)) are disordered. Gly residues predominate over residues 218–227 (SGGGGGGGCG). Over residues 269 to 282 (CSEDEEDEEIDVDD) the composition is skewed to acidic residues.

Interacts with SKOR1 which acts as a transcriptional corepressor. Expressed in the dorsal part of the spinal cord and hindbrain and in presumptive myogenic cells in lateral regions of differentiating somites.

It localises to the nucleus. In terms of biological role, transcription factor required for the development of GABAergic interneurons in the dorsal horn of the spinal cord and migration and further development of hypaxial muscle precursor cells for limb muscles, diaphragm and hypoglossal cord. This is Transcription factor LBX1 (Lbx1) from Mus musculus (Mouse).